The primary structure comprises 154 residues: Putative peroxiredoxin MT1643 (154 aa).

The Thioredoxin domain occupies 1–153 (MKTGDTVADF…ALATLRAIRS (153 aa)). The active-site Cysteine sulfenic acid (-SOH) intermediate is the Cys-44. Cysteines 44 and 49 form a disulfide.

The protein belongs to the peroxiredoxin family. BCP/PrxQ subfamily. As to quaternary structure, monomer.

The enzyme catalyses a hydroperoxide + [thioredoxin]-dithiol = an alcohol + [thioredoxin]-disulfide + H2O. In terms of biological role, thiol-specific peroxidase that catalyzes the reduction of hydrogen peroxide and organic hydroperoxides to water and alcohols, respectively. Plays a role in cell protection against oxidative stress by detoxifying peroxides and as sensor of hydrogen peroxide-mediated signaling events. This is Putative peroxiredoxin MT1643 (bcpB) from Mycobacterium tuberculosis (strain CDC 1551 / Oshkosh).